Consider the following 264-residue polypeptide: ATP synthase subunit a (264 aa).

The next 7 helical transmembrane spans lie at 41–61 (ITNI…INLL), 99–119 (IYFP…LIGM), 129–149 (HFVL…ILGF), 156–176 (FFSL…LVLI), 194–214 (ANIL…YNIM), 217–237 (GIIF…FSGL), and 238–258 (ELGI…GYIK).

It belongs to the ATPase A chain family. In terms of assembly, F-type ATPases have 2 components, CF(1) - the catalytic core - and CF(0) - the membrane proton channel. CF(1) has five subunits: alpha(3), beta(3), gamma(1), delta(1), epsilon(1). CF(0) has three main subunits: a, b and c.

The protein resides in the mitochondrion inner membrane. In terms of biological role, mitochondrial membrane ATP synthase (F(1)F(0) ATP synthase or Complex V) produces ATP from ADP in the presence of a proton gradient across the membrane which is generated by electron transport complexes of the respiratory chain. F-type ATPases consist of two structural domains, F(1) - containing the extramembraneous catalytic core and F(0) - containing the membrane proton channel, linked together by a central stalk and a peripheral stalk. During catalysis, ATP synthesis in the catalytic domain of F(1) is coupled via a rotary mechanism of the central stalk subunits to proton translocation. Key component of the proton channel; it may play a direct role in the translocation of protons across the membrane. The sequence is that of ATP synthase subunit a (ATP6) from Podospora anserina (strain S / ATCC MYA-4624 / DSM 980 / FGSC 10383) (Pleurage anserina).